We begin with the raw amino-acid sequence, 274 residues long: Ribosomal RNA small subunit methyltransferase A (274 aa).

S-adenosyl-L-methionine contacts are provided by histidine 15, leucine 17, glycine 42, glutamate 64, aspartate 89, and asparagine 108.

Belongs to the class I-like SAM-binding methyltransferase superfamily. rRNA adenine N(6)-methyltransferase family. RsmA subfamily.

The protein localises to the cytoplasm. It catalyses the reaction adenosine(1518)/adenosine(1519) in 16S rRNA + 4 S-adenosyl-L-methionine = N(6)-dimethyladenosine(1518)/N(6)-dimethyladenosine(1519) in 16S rRNA + 4 S-adenosyl-L-homocysteine + 4 H(+). In terms of biological role, specifically dimethylates two adjacent adenosines (A1518 and A1519) in the loop of a conserved hairpin near the 3'-end of 16S rRNA in the 30S particle. May play a critical role in biogenesis of 30S subunits. The polypeptide is Ribosomal RNA small subunit methyltransferase A (Prochlorococcus marinus (strain AS9601)).